A 125-amino-acid chain; its full sequence is Fatty acid-binding protein, liver-type (125 aa).

The protein belongs to the calycin superfamily. Fatty-acid binding protein (FABP) family.

It localises to the cytoplasm. In Takifugu rubripes (Japanese pufferfish), this protein is Fatty acid-binding protein, liver-type (fabp1).